A 102-amino-acid chain; its full sequence is Small ribosomal subunit protein uS10 (102 aa).

Belongs to the universal ribosomal protein uS10 family. In terms of assembly, part of the 30S ribosomal subunit.

Its function is as follows. Involved in the binding of tRNA to the ribosomes. In Pseudothermotoga lettingae (strain ATCC BAA-301 / DSM 14385 / NBRC 107922 / TMO) (Thermotoga lettingae), this protein is Small ribosomal subunit protein uS10.